The primary structure comprises 219 residues: Thymidylate kinase (219 aa).

9–16 (GIEGCGKT) is a binding site for ATP.

It belongs to the thymidylate kinase family.

The enzyme catalyses dTMP + ATP = dTDP + ADP. In terms of biological role, phosphorylation of dTMP to form dTDP in both de novo and salvage pathways of dTTP synthesis. In Syntrophus aciditrophicus (strain SB), this protein is Thymidylate kinase.